Reading from the N-terminus, the 291-residue chain is Homeobox protein SIX2 (291 aa).

Residues 124 to 183 (GEETSYCFKEKSRSVLREWYAHNPYPSPREKRELAEATGLTTTQVSNWFKNRRQRDRAAE) constitute a DNA-binding region (homeobox). Residues 168-279 (VSNWFKNRRQ…HHHGLQDSIL (112 aa)) form a disordered region. Over residues 179-190 (DRAAEAKERENN) the composition is skewed to basic and acidic residues. The span at 224–233 (HSSSSPALLL) shows a compositional bias: low complexity. Residues 249 to 259 (PPGPSAVPVPV) are compositionally biased toward pro residues.

Belongs to the SIX/Sine oculis homeobox family. In terms of assembly, interacts with TCF7L2; in a canonical Wnt signaling independent manner; prevents transcription of differentiation genes in cap mesenchyme. Interacts with OSR1; form a strong repressor complex with TCF7L2, TLE2 and TLE3 to prevent the activation of Wnt/beta-catenin target genes in the cap mesenchyme. Interacts with HOXA11, EYA1 and EYA3. As to expression, strongly expressed in skeletal muscle. Expressed in Wilms' tumor and in the cap mesenchyme of fetal kidney (at protein level).

Its subcellular location is the nucleus. Functionally, transcription factor that plays an important role in the development of several organs, including kidney, skull and stomach. During kidney development, maintains cap mesenchyme multipotent nephron progenitor cells in an undifferentiated state by opposing the inductive signals emanating from the ureteric bud and cooperates with WNT9B to promote renewing progenitor cells proliferation. Acts through its interaction with TCF7L2 and OSR1 in a canonical Wnt signaling independent manner preventing transcription of differentiation genes in cap mesenchyme such as WNT4. Also acts independently of OSR1 to activate expression of many cap mesenchyme genes, including itself, GDNF and OSR1. During craniofacial development plays a role in growth and elongation of the cranial base through regulation of chondrocyte differentiation. During stomach organogenesis, controls pyloric sphincter formation and mucosal growth through regulation of a gene network including NKX2-5, BMPR1B, BMP4, SOX9 and GREM1. During branchial arch development, acts to mediate HOXA2 control over the insulin-like growth factor pathway. May also be involved in limb tendon and ligament development. Plays a role in cell proliferation and migration. The polypeptide is Homeobox protein SIX2 (SIX2) (Homo sapiens (Human)).